A 130-amino-acid chain; its full sequence is Protein ApaG (130 aa).

Residues 3–127 form the ApaG domain; that stretch reads RALTRDIEVT…FSLDSPGLVR (125 aa).

The chain is Protein ApaG from Sinorhizobium fredii (strain NBRC 101917 / NGR234).